Consider the following 371-residue polypeptide: Histidinol-phosphate aminotransferase (371 aa).

Lysine 222 carries the post-translational modification N6-(pyridoxal phosphate)lysine.

This sequence belongs to the class-II pyridoxal-phosphate-dependent aminotransferase family. Histidinol-phosphate aminotransferase subfamily. Homodimer. Requires pyridoxal 5'-phosphate as cofactor.

The catalysed reaction is L-histidinol phosphate + 2-oxoglutarate = 3-(imidazol-4-yl)-2-oxopropyl phosphate + L-glutamate. It functions in the pathway amino-acid biosynthesis; L-histidine biosynthesis; L-histidine from 5-phospho-alpha-D-ribose 1-diphosphate: step 7/9. The chain is Histidinol-phosphate aminotransferase from Anoxybacillus flavithermus (strain DSM 21510 / WK1).